Consider the following 627-residue polypeptide: tRNA uridine 5-carboxymethylaminomethyl modification enzyme MnmG (627 aa).

Residues 16–21 (GAGHAG), V128, and S183 each bind FAD. An NAD(+)-binding site is contributed by 277-291 (GPRYCPSIEDKIVRF). Residue Q374 participates in FAD binding.

Belongs to the MnmG family. As to quaternary structure, homodimer. Heterotetramer of two MnmE and two MnmG subunits. FAD serves as cofactor.

Its subcellular location is the cytoplasm. Its function is as follows. NAD-binding protein involved in the addition of a carboxymethylaminomethyl (cmnm) group at the wobble position (U34) of certain tRNAs, forming tRNA-cmnm(5)s(2)U34. The protein is tRNA uridine 5-carboxymethylaminomethyl modification enzyme MnmG of Finegoldia magna (strain ATCC 29328 / DSM 20472 / WAL 2508) (Peptostreptococcus magnus).